The sequence spans 613 residues: Phostensin (613 aa).

The segment covering 15-33 (RRQEEASVRGREKAERERL) has biased composition (basic and acidic residues). Disordered stretches follow at residues 15-231 (RRQE…SAYQ) and 266-505 (GEER…GKKR). A phosphoserine mark is found at S54, S125, S133, S175, and S195. 2 stretches are compositionally biased toward basic and acidic residues: residues 104-154 (RSEE…ERRL) and 167-191 (LEAR…EPWK). At T199 the chain carries Phosphothreonine. Over residues 199–221 (TPERSLRLAESREQSPRRKEVES) the composition is skewed to basic and acidic residues. S224 is modified (phosphoserine). Basic and acidic residues predominate over residues 266–282 (GEERQGYSEKCGRKEEW). Residues 301-310 (REAQGSSSTG) show a composition bias toward polar residues. Basic and acidic residues-rich tracts occupy residues 314–327 (AEQR…RGMK), 340–350 (KAREWTPRDIE), and 357–367 (EPSESAEKRLE). Residues S368 and S432 each carry the phosphoserine modification. Pro residues predominate over residues 424–446 (QPPPPAPLSPPPPAPTAPQPPGD). K457 bears the N6-acetyllysine mark. Over residues 476-499 (PRRSVPPTTPATPTSPATADAAVP) the composition is skewed to low complexity. S490 and S530 each carry phosphoserine. The disordered stretch occupies residues 552–594 (QYPSESSVLEELGPEPEVPSAPNPPAAQPDDEEDEEELLLLQP). Pro residues predominate over residues 567–578 (PEVPSAPNPPAA). The span at 580-589 (PDDEEDEEEL) shows a compositional bias: acidic residues.

In terms of assembly, interacts with Protein phosphatase 1 (PP1).

The protein resides in the cytoplasm. It localises to the cytoskeleton. May target protein phosphatase 1 to F-actin cytoskeleton. The polypeptide is Phostensin (PPP1R18) (Macaca mulatta (Rhesus macaque)).